Reading from the N-terminus, the 330-residue chain is Ketol-acid reductoisomerase (NADP(+)) (330 aa).

Residues alanine 2–threonine 181 enclose the KARI N-terminal Rossmann domain. NADP(+)-binding positions include tyrosine 25 to glutamine 28, arginine 48, serine 52, and aspartate 82 to glutamine 85. Histidine 107 is a catalytic residue. Position 133 (glycine 133) interacts with NADP(+). The KARI C-terminal knotted domain occupies threonine 182–isoleucine 327. Mg(2+) is bound by residues aspartate 190, glutamate 194, glutamate 226, and glutamate 230. Residue serine 251 participates in substrate binding.

The protein belongs to the ketol-acid reductoisomerase family. Mg(2+) is required as a cofactor.

The catalysed reaction is (2R)-2,3-dihydroxy-3-methylbutanoate + NADP(+) = (2S)-2-acetolactate + NADPH + H(+). The enzyme catalyses (2R,3R)-2,3-dihydroxy-3-methylpentanoate + NADP(+) = (S)-2-ethyl-2-hydroxy-3-oxobutanoate + NADPH + H(+). The protein operates within amino-acid biosynthesis; L-isoleucine biosynthesis; L-isoleucine from 2-oxobutanoate: step 2/4. It functions in the pathway amino-acid biosynthesis; L-valine biosynthesis; L-valine from pyruvate: step 2/4. Involved in the biosynthesis of branched-chain amino acids (BCAA). Catalyzes an alkyl-migration followed by a ketol-acid reduction of (S)-2-acetolactate (S2AL) to yield (R)-2,3-dihydroxy-isovalerate. In the isomerase reaction, S2AL is rearranged via a Mg-dependent methyl migration to produce 3-hydroxy-3-methyl-2-ketobutyrate (HMKB). In the reductase reaction, this 2-ketoacid undergoes a metal-dependent reduction by NADPH to yield (R)-2,3-dihydroxy-isovalerate. This Macrococcus caseolyticus (strain JCSC5402) (Macrococcoides caseolyticum) protein is Ketol-acid reductoisomerase (NADP(+)).